Consider the following 474-residue polypeptide: Nitrosuccinate lyase (474 aa).

The active-site Proton acceptor is the Ser295. 2 residues coordinate fumarate: Lys301 and Asn303. Catalysis depends on Arg334, which acts as the Proton donor.

This sequence belongs to the class-II fumarase/aspartase family.

The enzyme catalyses 2-nitrobutanedioate = fumarate + nitrite + H(+). Its function is as follows. Involved in the biosynthesis of desferrioxamine derivatives which have iron-binding properties and may act as siderophores. Catalyzes the formation of nitrous acid from nitrosuccinic acid (2-nitrobutanedioate) by elimination of its nitro group. In Streptomyces davaonensis (strain DSM 101723 / JCM 4913 / KCC S-0913 / 768), this protein is Nitrosuccinate lyase.